A 519-amino-acid polypeptide reads, in one-letter code: Nitrogen fixation regulatory protein (519 aa).

The 71-residue stretch at 23–93 folds into the PAS 1 domain; it reads LPEIFRQTVE…QALWGRLAQK (71 aa). The PAC domain occupies 94–148; the sequence is KPWSGVLVNRRKDKTLYLAELTVAPVLNEAGETIYYLGMHRDTSELHELEQRVNN. One can recognise a PAS 2 domain in the interval 151-217; the sequence is LMIEAVVNAA…FETLENQGSA (67 aa). The Histidine kinase domain occupies 302–517; that stretch reads AAIHRLQGPV…RIVVELPFSA (216 aa). His-305 carries the post-translational modification Phosphohistidine; by autocatalysis.

FAD is required as a cofactor.

The enzyme catalyses ATP + protein L-histidine = ADP + protein N-phospho-L-histidine.. Its function is as follows. Required for the inhibition of NifA activity in response to oxygen and low level of fixed nitrogen. The sequence is that of Nitrogen fixation regulatory protein (nifL) from Azotobacter vinelandii.